Here is a 302-residue protein sequence, read N- to C-terminus: Succinate--CoA ligase [ADP-forming] subunit alpha (302 aa).

Residues 17 to 20, K43, and 96 to 98 each bind CoA; these read TGST and ITE. Y159 contributes to the substrate binding site. H247 serves as the catalytic Tele-phosphohistidine intermediate.

It belongs to the succinate/malate CoA ligase alpha subunit family. Heterotetramer of two alpha and two beta subunits.

The catalysed reaction is succinate + ATP + CoA = succinyl-CoA + ADP + phosphate. The enzyme catalyses GTP + succinate + CoA = succinyl-CoA + GDP + phosphate. Its pathway is carbohydrate metabolism; tricarboxylic acid cycle; succinate from succinyl-CoA (ligase route): step 1/1. Functionally, succinyl-CoA synthetase functions in the citric acid cycle (TCA), coupling the hydrolysis of succinyl-CoA to the synthesis of either ATP or GTP and thus represents the only step of substrate-level phosphorylation in the TCA. The alpha subunit of the enzyme binds the substrates coenzyme A and phosphate, while succinate binding and nucleotide specificity is provided by the beta subunit. The protein is Succinate--CoA ligase [ADP-forming] subunit alpha of Staphylococcus epidermidis (strain ATCC 12228 / FDA PCI 1200).